The chain runs to 787 residues: Protocadherin beta-15 (787 aa).

A signal peptide spans 1 to 26; it reads MEPAGERFPEQRQVLILLLLLEVTLA. Over 27–690 the chain is Extracellular; it reads GWEPRRYSVM…AQADSLTVYL (664 aa). Cadherin domains follow at residues 35–133, 138–242, 247–347, 352–451, and 456–561; these read VMEE…SPEF, ITLK…APEF, YEVQ…FPEL, LTSP…APAF, and YTLF…SPFV. 2 N-linked (GlcNAc...) asparagine glycosylation sites follow: asparagine 418 and asparagine 436. Asparagine 567 carries an N-linked (GlcNAc...) asparagine glycan. The region spanning 568–671 is the Cadherin 6 domain; the sequence is GSAPCTELVP…LVDGFSQPYL (104 aa). The chain crosses the membrane as a helical span at residues 691–711; that stretch reads VVALASVSSLFLFSVLLFVAV. Residues 712–787 lie on the Cytoplasmic side of the membrane; sequence RLCRRSRAAS…DSRRKSEFLE (76 aa).

Its subcellular location is the cell membrane. In terms of biological role, potential calcium-dependent cell-adhesion protein. May be involved in the establishment and maintenance of specific neuronal connections in the brain. The protein is Protocadherin beta-15 (PCDHB15) of Pan troglodytes (Chimpanzee).